Consider the following 92-residue polypeptide: Small ribosomal subunit protein uS19 (92 aa).

This sequence belongs to the universal ribosomal protein uS19 family.

In terms of biological role, protein S19 forms a complex with S13 that binds strongly to the 16S ribosomal RNA. This is Small ribosomal subunit protein uS19 from Tolumonas auensis (strain DSM 9187 / NBRC 110442 / TA 4).